The primary structure comprises 1005 residues: Espin-like protein (1005 aa).

10 ANK repeats span residues 1–31 (MEAQ…RPDI), 35–64 (LGAG…LPGN), 69–99 (NGAT…GLQD), 103–132 (SGVS…AATL), 136–166 (EGAL…GVNQ), 170–200 (SGAS…DVRL), 204–234 (DGMS…GLTA), 238–267 (EGAT…PIMR), 270–299 (WGGT…DPFL), and 303–332 (DGYT…PVRV). 2 disordered regions span residues 355-383 (EERR…VPRE) and 458-480 (ADHP…AAEQ). Basic and acidic residues predominate over residues 458 to 469 (ADHPPEDQDQSQ). Positions 502 to 539 (EDDLVYLEKQINDLQLRRRCQEYESELGRLAAQLQALL) form a coiled coil. Disordered regions lie at residues 611-643 (LAQG…QREI), 692-729 (PRGD…GPGL), 764-794 (LEAQ…PRLG), and 951-975 (PHAS…SQGS).

In terms of assembly, interacts with MYO3A (via C-terminus). Interacts with MYO3B (via C-terminus). As to expression, expressed in inner ear hair cells. Expressed in utricle hair bundles (at protein level). Expressed in choclea (at protein level).

The protein resides in the cell projection. It is found in the stereocilium. In terms of biological role, binds to but does not cross-link actin. Required for the formation and maintenance of inner ear hair cell stereocilia and staircase formation. Essential for normal hearing. This chain is Espin-like protein (Espnl), found in Mus musculus (Mouse).